A 721-amino-acid chain; its full sequence is Exocyst complex component 3-like protein 4 (721 aa).

2 disordered regions span residues 1–52 and 94–135; these read MPLP…SLGM and GLTA…QAES. Residues 22–37 are compositionally biased toward polar residues; that stretch reads SQTLPVTTWKSNSMKE. Ser515 carries the post-translational modification Phosphoserine.

The protein belongs to the SEC6 family.

In Mus musculus (Mouse), this protein is Exocyst complex component 3-like protein 4 (Exoc3l4).